The primary structure comprises 145 residues: FAD synthase (145 aa).

ATP-binding positions include 9 to 10 (TF), 14 to 17 (HPGH), D94, and Y122.

It belongs to the archaeal FAD synthase family. As to quaternary structure, homodimer. A divalent metal cation is required as a cofactor.

The enzyme catalyses FMN + ATP + H(+) = FAD + diphosphate. It participates in cofactor biosynthesis; FAD biosynthesis; FAD from FMN: step 1/1. In terms of biological role, catalyzes the transfer of the AMP portion of ATP to flavin mononucleotide (FMN) to produce flavin adenine dinucleotide (FAD) coenzyme. The protein is FAD synthase of Methanocaldococcus infernus (strain DSM 11812 / JCM 15783 / ME).